The following is a 266-amino-acid chain: Glutamate racemase (266 aa).

Substrate is bound by residues 9 to 10 (DS) and 41 to 42 (YG). Cys72 acts as the Proton donor/acceptor in catalysis. Residue 73–74 (NT) coordinates substrate. Cys184 (proton donor/acceptor) is an active-site residue. 185–186 (TH) provides a ligand contact to substrate.

This sequence belongs to the aspartate/glutamate racemases family.

The catalysed reaction is L-glutamate = D-glutamate. Its pathway is cell wall biogenesis; peptidoglycan biosynthesis. Functionally, provides the (R)-glutamate required for cell wall biosynthesis. The protein is Glutamate racemase of Staphylococcus carnosus (strain TM300).